A 64-amino-acid polypeptide reads, in one-letter code: uncharacterized protein (64 aa).

A helical transmembrane segment spans residues 30–52 (FYAIFEMLFWPLVSLISVGLLGE).

The protein resides in the membrane. This is an uncharacterized protein from Archaeoglobus fulgidus (strain ATCC 49558 / DSM 4304 / JCM 9628 / NBRC 100126 / VC-16).